A 773-amino-acid polypeptide reads, in one-letter code: FT-interacting protein 3 (773 aa).

Basic and acidic residues predominate over residues 1–16 (MQRPPPEDFSLKETRP). The segment at 1–24 (MQRPPPEDFSLKETRPHLGGGKLS) is disordered. C2 domains are found at residues 22–142 (KLSG…PQWY), 181–305 (VSGT…SRWY), and 345–471 (YSSD…THSY). Positions 55, 61, 108, 110, and 115 each coordinate Ca(2+). 3 helical membrane passes run 574–594 (IMGV…ICNW), 608–628 (IILV…LFLI), and 716–736 (LFVL…FQVV).

This sequence belongs to the MCTP family. In terms of assembly, interacts with and regulates subcellular localization and trafficking of STM. Ca(2+) is required as a cofactor. Accumulates in vascular tissues, leaf primordia and flowers. Highly expressed in roots meristems and in both vegetative and inflorescence shoot apical meristems (SAMs).

The protein resides in the endoplasmic reticulum membrane. The protein localises to the cytoplasm. It localises to the vesicle. It is found in the cell membrane. Its subcellular location is the endosome membrane. The protein resides in the golgi apparatus membrane. Required for proliferation and differentiation of shoot stem cells in the shoot apical meristem (SAM), thus determining the appropriate balance between the maintenance of shoot stem cells and their differentiation into other aboveground plant parts via the control of subcellular localization and intercellular trafficking of STM in the shoot apex. Prevents intracellular trafficking of STM to the plasma membrane in cells in the peripheral shoot meristem region thus facilitating STM recycling to the nucleus to maintain stem cells. May function as a signaling molecule by regulating the trafficking of other regulators. This is FT-interacting protein 3 from Arabidopsis thaliana (Mouse-ear cress).